Here is a 260-residue protein sequence, read N- to C-terminus: 14-3-3-like protein GF14-F (260 aa).

The tract at residues 241–260 (NAEDGGDEIKEAAKPEGEGH) is disordered. Positions 247-260 (DEIKEAAKPEGEGH) are enriched in basic and acidic residues.

It belongs to the 14-3-3 family. In terms of assembly, may form a complex with the transcriptional activator VP1 and the bZIP transcription factor EMBP1. Expressed in seedlings, roots and panicles and at lower levels in flag leaves and internodes.

Its subcellular location is the cytoplasm. The protein localises to the nucleus. Functionally, is associated with a DNA binding complex that binds to the G box, a well-characterized cis-acting DNA regulatory element found in plant genes. This chain is 14-3-3-like protein GF14-F (GF14F), found in Oryza sativa subsp. japonica (Rice).